Reading from the N-terminus, the 181-residue chain is Protein Syd (181 aa).

Belongs to the Syd family.

The protein resides in the cell inner membrane. Functionally, interacts with the SecY protein in vivo. May bind preferentially to an uncomplexed state of SecY, thus functioning either as a chelating agent for excess SecY in the cell or as a regulatory factor that negatively controls the translocase function. In Shigella flexneri, this protein is Protein Syd.